The chain runs to 281 residues: UPF0500 protein C1orf216 homolog (281 aa).

Over residues 1–12 (MFTIQKPDTVSH) the composition is skewed to polar residues. Positions 1 to 197 (MFTIQKPDTV…SSSDSDSISV (197 aa)) are disordered. Residues 45–74 (TYDKNENWSQDKKGGEEGENKSKSEDEHSS) are compositionally biased toward basic and acidic residues. Composition is skewed to low complexity over residues 92 to 102 (STGSEGISLSS), 147 to 161 (SSSL…VSAS), and 169 to 178 (PAPTTTPQEN). The span at 179–190 (PETEDSDVESSS) shows a compositional bias: acidic residues. Positions 198–257 (TLSEAFQSLQDKEKLKEREKEKHHAQLTMYRRLALLRWIRALQQKVRDQQNRLQESFDTI) form a coiled coil.

Belongs to the UPF0500 family.

This chain is UPF0500 protein C1orf216 homolog, found in Xenopus laevis (African clawed frog).